The primary structure comprises 431 residues: Glutamate-1-semialdehyde 2,1-aminomutase (431 aa).

N6-(pyridoxal phosphate)lysine is present on Lys267.

The protein belongs to the class-III pyridoxal-phosphate-dependent aminotransferase family. HemL subfamily. Homodimer. It depends on pyridoxal 5'-phosphate as a cofactor.

It is found in the cytoplasm. It catalyses the reaction (S)-4-amino-5-oxopentanoate = 5-aminolevulinate. Its pathway is porphyrin-containing compound metabolism; protoporphyrin-IX biosynthesis; 5-aminolevulinate from L-glutamyl-tRNA(Glu): step 2/2. In Myxococcus xanthus (strain DK1622), this protein is Glutamate-1-semialdehyde 2,1-aminomutase.